Reading from the N-terminus, the 468-residue chain is ATP synthase subunit beta (468 aa).

ATP is bound at residue 148 to 155; sequence GGAGVGKT.

It belongs to the ATPase alpha/beta chains family. F-type ATPases have 2 components, CF(1) - the catalytic core - and CF(0) - the membrane proton channel. CF(1) has five subunits: alpha(3), beta(3), gamma(1), delta(1), epsilon(1). CF(0) has three main subunits: a(1), b(2) and c(9-12). The alpha and beta chains form an alternating ring which encloses part of the gamma chain. CF(1) is attached to CF(0) by a central stalk formed by the gamma and epsilon chains, while a peripheral stalk is formed by the delta and b chains.

The protein localises to the cell inner membrane. It catalyses the reaction ATP + H2O + 4 H(+)(in) = ADP + phosphate + 5 H(+)(out). Functionally, produces ATP from ADP in the presence of a proton gradient across the membrane. The catalytic sites are hosted primarily by the beta subunits. The sequence is that of ATP synthase subunit beta from Xanthomonas campestris pv. campestris (strain 8004).